We begin with the raw amino-acid sequence, 536 residues long: Anthranilate synthase component 1 2 (536 aa).

L-tryptophan contacts are provided by residues Ser-59 and 299 to 301 (PYM). 334–335 (GT) lines the chorismate pocket. Residue Glu-361 participates in Mg(2+) binding. Residues Tyr-449, Arg-469, 487–489 (GAG), and Gly-489 each bind chorismate. Position 502 (Glu-502) interacts with Mg(2+).

Belongs to the anthranilate synthase component I family. Tetramer of two components I and two components II. Mg(2+) is required as a cofactor.

It carries out the reaction chorismate + L-glutamine = anthranilate + pyruvate + L-glutamate + H(+). It participates in amino-acid biosynthesis; L-tryptophan biosynthesis; L-tryptophan from chorismate: step 1/5. The sequence is that of Anthranilate synthase component 1 2 (trpE2) from Haloarcula marismortui (strain ATCC 43049 / DSM 3752 / JCM 8966 / VKM B-1809) (Halobacterium marismortui).